The following is a 512-amino-acid chain: MEEETETRVFLSNEQHQEEEEEEEEEPSLPRSMVISLYLGYFLARWGARTWEFSVALYMIYLWPNSLFLTAMYGVVESGSATLFGPIVGQMIDGMSYVKVLRLWLVTQNLSFIVAGGAVVALLVVPDLKSQNFPVFATLVVLTNLSGAIGVLSTLAGTVLIERDWVVVMSEGHSPAVLTRMNSVIRGIDLSSKLLSPVITGLIISFVSLRASAITFAAWATITVWIEYWLFISVYNGVPAIVQSDERRSLRSSQSQAEETDSASSFYVPLLHEEESYRNTQSRSRILRILERISESSFVSAWRNYLNQEIVLPGVSLALLFFTVLSFGTLMTATLEWKGIPTYIIGIGRGISAGVGLAATVLYPLMQSRISPLRTGVWSFWSQWTCLLVCVGSIWVEKEKIASYMLMAGVAASRLGLWMFDLAVIQQMQDLVPESDRCVVGGVQNSLQSALDLMANLLGIIVSNPKDFWMLTLISFATVSLAGILYTIHLYRIRKHLFHLEKIPLLNNFFAS.

Residues 1 to 28 are disordered; that stretch reads MEEETETRVFLSNEQHQEEEEEEEEEPS. The span at 17–27 shows a compositional bias: acidic residues; it reads QEEEEEEEEEP. 11 helical membrane-spanning segments follow: residues 55-75, 105-125, 133-153, 187-207, 214-234, 310-330, 343-363, 376-396, 405-425, 442-462, and 468-488; these read VALY…MYGV, LVTQ…LLVV, FPVF…GVLS, GIDL…ISFV, ITFA…FISV, IVLP…FGTL, YIIG…TVLY, GVWS…SIWV, MLMA…LAVI, GVQN…GIIV, and FWML…LYTI.

Belongs to the ferroportin (FP) (TC 2.A.100) family. SLC40A subfamily.

It localises to the vacuole membrane. Its function is as follows. Vacuolar transporter that is involved in the transport of excess nickel into the vacuole under iron deficiency, increasing cellular tolerance to nickel under iron deficiency stress response. In Arabidopsis thaliana (Mouse-ear cress), this protein is Solute carrier family 40 member 2 (IREG2).